The following is a 143-amino-acid chain: UPF0763 protein HH_0976 (143 aa).

It belongs to the UPF0763 family.

The sequence is that of UPF0763 protein HH_0976 from Helicobacter hepaticus (strain ATCC 51449 / 3B1).